Consider the following 1649-residue polypeptide: MDDDSLDELVARSPGPDGHPQVGPADPAGDFEESSVGSSGDSGDDSDSEHGDGTDGEDEGASEEEDLEDRSGSEDSEDDGETLLEVAGTQGKLEAAGSFNSDDDAESCPICLNAFRDQAVGTPENCAHYFCLDCIVEWSKNANSCPVDRTLFKCICIRAQFGGKILRKIPVENTKASEEEEDPTFCEVCGRSDREDRLLLCDGCDAGYHMECLDPPLQEVPVDEWFCPECAAPGVVLAADAGPVSEEEVSLLLADVVPTTSRLRPRAGRTRAIARTRQSERVRATVNRNRISTARRVQHTPGRLGSSLLDEAIEAVATGLSTAVYQRPLTPRTPARRKRKTRRRKKVPGRKKTPSGPSAKSKSSATRSKKRQHRVKKRRGKKVKSEATTRSRIARTLGLRRPVHSSCIPSVLKPVEPSLGLLRADIGAASLSLFGDPYELDPFDSSEELSANPLSPLSAKRRALSRSALQSHQPVARPVSVGLSRRRLPAAVPEPDLEEEPVPDLLGSILSGQSLLMLGSSDVIIHRDGSLSAKRAAPVSFQRNSGSLSRGEEGFKGCLQPRALPSGSPAQGPSGNRPQSTGLSCQGRSRTPARTAGAPVRLDLPAAPGAVQARNLSNGSVPGFRQSHSPWFNGTNKHTLPLASAASKISSRDSKPPCRSVVPGPPLKPAPRRTDISELPRIPKIRRDDGGGRRDAAPAHGQSIEIPSACISRLTGREGTGQPGRGTRAESEASSRVPREPGVHTGSSRPPAPSSHGSLAPLGPSRGKGVGSTFESFRINIPGNMAHSSQLSSPGFCNTFRPVDDKEQRKENPSPLFSIKKTKQLRSEVYDPSDPTGSDSSAPGSSPERSGPGLLPSEITRTISINSPKAQTVQAVRCVTSYTVESIFGTEPEPPLGPSSAMSKLRGAVAAEGASDTEREEPTESQGLAARLRRPSPPEPWDEEDGASCSTFFGSEERTVTCVTVVEPEAPPSPDVLQAATHRVVELRPPSRSRSTSSSRSRKKAKRKRVSREHGRTRSGTRSESRDRSSRSASPSVGEERPRRQRSKAKSRRSSSDRSSSRERAKRKKAKDKSREHRRGPWGHSRRTSRSRSGSPGSSSYEHYESRKKKKRRSASRPRGRECSPTSSLERLCRHKHQRERSHERPDRKESVAWPRDRRKRRSRSPSSEHRAREHRRPRSREKWPQTRSHSPERKGAVREASPAPLAQGEPGREDLPTRLPALGEAHVSPEVATADKAPLQAPPVLEVAAECEPDDLDLDYGDSVEAGHVFDDFSSDAVFIQLDDMSSPPSPESTDSSPERDFPLKPALPPASLAVAAIQREVSLMHDEDPSQPPPLPEGTQEPHLLRPDAAEKAEAPSSPDVAPAGKEDSPSASGRVQEAARPEEVVSQTPLLRSRALVKRVTWNLQESESSAPAEDRAPRAPLHRPQKPREGAWDMEDVAPTGVRQVFSELPFPSHVLPEPGFPDTDPSQVYSPGLPPAPAQPSSIPPCALVSQPTVQFILQGSLPLVGCGAAQTLAPVPAALTPASEPASQATAASNSEEKTPAPRLAAEKTKKEEYMKKLHMQERAVEEVKLAIKPFYQKREVTKEEYKDILRKAVQKICHSKSGEINPVKVANLVKAYVDKYRHMRRHKKPEAGEEPPTQGAEG.

Residues 1–79 form a disordered region; it reads MDDDSLDELV…RSGSEDSEDD (79 aa). The residue at position 5 (Ser-5) is a Phosphoserine. A compositionally biased stretch (acidic residues) spans 54 to 79; the sequence is TDGEDEGASEEEDLEDRSGSEDSEDD. The RING-type; degenerate zinc finger occupies 108–149; it reads CPICLNAFRDQAVGTPENCAHYFCLDCIVEWSKNANSCPVDR. Residues 183–233 form a PHD-type zinc finger; it reads PTFCEVCGRSDREDRLLLCDGCDAGYHMECLDPPLQEVPVDEWFCPECAAP. Residues 324 to 398 form a disordered region; sequence VYQRPLTPRT…TRSRIARTLG (75 aa). Residue Thr-330 is modified to Phosphothreonine. Over residues 334–353 the composition is skewed to basic residues; that stretch reads PARRKRKTRRRKKVPGRKKT. Residues 354 to 366 are compositionally biased toward low complexity; the sequence is PSGPSAKSKSSAT. The segment covering 367-382 has biased composition (basic residues); the sequence is RSKKRQHRVKKRRGKK. Residues Ser-445 and Ser-455 each carry the phosphoserine modification. Disordered stretches follow at residues 534–600, 644–871, 888–1240, and 1281–1395; these read KRAA…GAPV, SAAS…PKAQ, FGTE…KAPL, and IQLD…PLLR. Residues 568–589 show a composition bias toward polar residues; that stretch reads SPAQGPSGNRPQSTGLSCQGRS. Basic and acidic residues-rich tracts occupy residues 685-697 and 727-742; these read IRRDDGGGRRDAA and TRAESEASSRVPREPG. A compositionally biased stretch (polar residues) spans 786-796; the sequence is AHSSQLSSPGF. Basic and acidic residues predominate over residues 802–812; that stretch reads PVDDKEQRKEN. Residues Ser-814, Ser-845, Ser-846, Ser-864, Ser-867, and Ser-915 each carry the phosphoserine modification. Composition is skewed to polar residues over residues 835-848 and 859-871; these read PTGSDSSAPGSSPE and ITRTISINSPKAQ. The residue at position 917 (Thr-917) is a Phosphothreonine. Phosphoserine is present on residues Ser-936, Ser-973, and Ser-991. The span at 988 to 999 shows a compositional bias: low complexity; the sequence is RPPSRSRSTSSS. A compositionally biased stretch (basic residues) spans 1000–1011; that stretch reads RSRKKAKRKRVS. Basic and acidic residues predominate over residues 1012 to 1030; the sequence is REHGRTRSGTRSESRDRSS. The span at 1043–1053 shows a compositional bias: basic residues; it reads RRQRSKAKSRR. Basic and acidic residues predominate over residues 1054 to 1063; it reads SSSDRSSSRE. The span at 1064 to 1090 shows a compositional bias: basic residues; sequence RAKRKKAKDKSREHRRGPWGHSRRTSR. Residues 1091–1101 are compositionally biased toward low complexity; that stretch reads SRSGSPGSSSY. A compositionally biased stretch (basic residues) spans 1106-1118; sequence SRKKKKRRSASRP. A phosphoserine mark is found at Ser-1124 and Ser-1128. Basic and acidic residues-rich tracts occupy residues 1141–1151 and 1181–1198; these read RSHERPDRKES and REKWPQTRSHSPERKGAV. A phosphoserine mark is found at Ser-1202 and Ser-1229. Low complexity predominate over residues 1284–1297; it reads DDMSSPPSPESTDS. Positions 1345 to 1356 are enriched in basic and acidic residues; it reads HLLRPDAAEKAE. Phosphoserine occurs at positions 1359, 1360, and 1371. Thr-1404 bears the Phosphothreonine mark. Disordered regions lie at residues 1407-1439, 1455-1486, 1526-1556, and 1630-1649; these read LQESESSAPAEDRAPRAPLHRPQKPREGAWDME, FPSHVLPEPGFPDTDPSQVYSPGLPPAPAQPS, TPASEPASQATAASNSEEKTPAPRLAAEKTK, and MRRHKKPEAGEEPPTQGAEG. The span at 1531–1540 shows a compositional bias: polar residues; the sequence is PASQATAASN. A compositionally biased stretch (basic and acidic residues) spans 1541-1556; sequence SEEKTPAPRLAAEKTK. Residues 1549 to 1579 adopt a coiled-coil conformation; it reads RLAAEKTKKEEYMKKLHMQERAVEEVKLAIK.

As to quaternary structure, interacts with POLR2A (via the C-terminal domain).

The polypeptide is PHD and RING finger domain-containing protein 1 (PHRF1) (Homo sapiens (Human)).